The following is a 177-amino-acid chain: Large ribosomal subunit protein uL6 (177 aa).

It belongs to the universal ribosomal protein uL6 family. Part of the 50S ribosomal subunit.

Its function is as follows. This protein binds to the 23S rRNA, and is important in its secondary structure. It is located near the subunit interface in the base of the L7/L12 stalk, and near the tRNA binding site of the peptidyltransferase center. The polypeptide is Large ribosomal subunit protein uL6 (Histophilus somni (strain 2336) (Haemophilus somnus)).